Consider the following 174-residue polypeptide: UPF0340 protein SAR2202 (174 aa).

Belongs to the UPF0340 family.

The protein is UPF0340 protein SAR2202 of Staphylococcus aureus (strain MRSA252).